Here is a 750-residue protein sequence, read N- to C-terminus: Photosystem I P700 chlorophyll a apoprotein A1 (750 aa).

8 helical membrane-spanning segments follow: residues 70-93 (VFSAHFGQLSIIFLWLSGMYFHGA), 156-179 (LYCTAIGALIFAALMLFAGWFHYH), 195-219 (LNHHLAGLLGLGSLSWAGHQVHVSL), 291-309 (TAHHHLAIAILFLIAGHMY), 346-369 (WHAQLSLNLAMLGSLTIVVAHHMY), 385-411 (LSLFTHHMWIGGFLIVGAAAHAAIFMV), 433-455 (AIISHLNWACIFLGFHSFGLYIH), and 531-549 (FLVHHIHAFTIHVTVLILL). Cys573 and Cys582 together coordinate [4Fe-4S] cluster. The next 2 membrane-spanning stretches (helical) occupy residues 589–610 (HVFLGLFWMYNSISVVIFHFSW) and 664–686 (LSAYGLFFLGAHFVWAFSLMFLF). His675 provides a ligand contact to chlorophyll a'. Met683 and Tyr691 together coordinate chlorophyll a. A phylloquinone-binding site is contributed by Trp692. A helical membrane pass occupies residues 724-744 (AVGVTHYLLGGIATTWAFFLA).

It belongs to the PsaA/PsaB family. As to quaternary structure, the PsaA/B heterodimer binds the P700 chlorophyll special pair and subsequent electron acceptors. PSI consists of a core antenna complex that captures photons, and an electron transfer chain that converts photonic excitation into a charge separation. The eukaryotic PSI reaction center is composed of at least 11 subunits. It depends on P700 is a chlorophyll a/chlorophyll a' dimer, A0 is one or more chlorophyll a, A1 is one or both phylloquinones and FX is a shared 4Fe-4S iron-sulfur center. as a cofactor.

The protein localises to the plastid. Its subcellular location is the chloroplast thylakoid membrane. The enzyme catalyses reduced [plastocyanin] + hnu + oxidized [2Fe-2S]-[ferredoxin] = oxidized [plastocyanin] + reduced [2Fe-2S]-[ferredoxin]. Its function is as follows. PsaA and PsaB bind P700, the primary electron donor of photosystem I (PSI), as well as the electron acceptors A0, A1 and FX. PSI is a plastocyanin-ferredoxin oxidoreductase, converting photonic excitation into a charge separation, which transfers an electron from the donor P700 chlorophyll pair to the spectroscopically characterized acceptors A0, A1, FX, FA and FB in turn. Oxidized P700 is reduced on the lumenal side of the thylakoid membrane by plastocyanin. The chain is Photosystem I P700 chlorophyll a apoprotein A1 from Helianthus annuus (Common sunflower).